The sequence spans 236 residues: uncharacterized protein (236 aa).

The signal sequence occupies residues 1-23 (MRRILSILVFAIMLAGCSSNAST). The segment at 22-62 (STEKQHAGGEKTVKAEPQSTSSQKDSTDDYQPNSQVTDDRT) is disordered. A compositionally biased stretch (basic and acidic residues) spans 24-35 (EKQHAGGEKTVK).

This is an uncharacterized protein from Bacillus subtilis (strain 168).